Here is a 188-residue protein sequence, read N- to C-terminus: dCTP deaminase (188 aa).

DCTP-binding positions include lysine 111 to arginine 116, threonine 135 to glutamate 137, glutamine 156, tyrosine 170, and glutamine 180. Residue glutamate 137 is the Proton donor/acceptor of the active site.

The protein belongs to the dCTP deaminase family. In terms of assembly, homotrimer.

It catalyses the reaction dCTP + H2O + H(+) = dUTP + NH4(+). The protein operates within pyrimidine metabolism; dUMP biosynthesis; dUMP from dCTP (dUTP route): step 1/2. Functionally, catalyzes the deamination of dCTP to dUTP. This chain is dCTP deaminase, found in Neisseria gonorrhoeae (strain ATCC 700825 / FA 1090).